A 247-amino-acid chain; its full sequence is Carboxy-S-adenosyl-L-methionine synthase (247 aa).

S-adenosyl-L-methionine is bound by residues Y39, 64–66 (GCS), 89–90 (DN), 117–118 (DI), N132, and R199.

It belongs to the class I-like SAM-binding methyltransferase superfamily. Cx-SAM synthase family. In terms of assembly, homodimer.

The catalysed reaction is prephenate + S-adenosyl-L-methionine = carboxy-S-adenosyl-L-methionine + 3-phenylpyruvate + H2O. Functionally, catalyzes the conversion of S-adenosyl-L-methionine (SAM) to carboxy-S-adenosyl-L-methionine (Cx-SAM). This Escherichia fergusonii (strain ATCC 35469 / DSM 13698 / CCUG 18766 / IAM 14443 / JCM 21226 / LMG 7866 / NBRC 102419 / NCTC 12128 / CDC 0568-73) protein is Carboxy-S-adenosyl-L-methionine synthase.